The following is a 148-amino-acid chain: Protein ORM1 (148 aa).

The next 4 membrane-spanning stretches (helical) occupy residues 12–32 (WIIH…FPGV), 36–56 (WSWT…FHLI), 89–109 (FLII…HYDL), and 111–131 (MFSW…LPVT).

This sequence to yeast YLR350W C-terminus.

The protein resides in the membrane. In Saccharomyces pastorianus (strain ATCC 76670 / Carlsberg bottom yeast no.2 / CBS 1503 / CLIB 180 / NBRC 10610 / NRRL Y-1525) (Saaz-type lager yeast), this protein is Protein ORM1 (ORM1).